The chain runs to 179 residues: Large ribosomal subunit protein uL5 (179 aa).

The protein belongs to the universal ribosomal protein uL5 family. Part of the 50S ribosomal subunit; part of the 5S rRNA/L5/L18/L25 subcomplex. Contacts the 5S rRNA and the P site tRNA. Forms a bridge to the 30S subunit in the 70S ribosome.

Functionally, this is one of the proteins that bind and probably mediate the attachment of the 5S RNA into the large ribosomal subunit, where it forms part of the central protuberance. In the 70S ribosome it contacts protein S13 of the 30S subunit (bridge B1b), connecting the 2 subunits; this bridge is implicated in subunit movement. Contacts the P site tRNA; the 5S rRNA and some of its associated proteins might help stabilize positioning of ribosome-bound tRNAs. The chain is Large ribosomal subunit protein uL5 from Dictyoglomus thermophilum (strain ATCC 35947 / DSM 3960 / H-6-12).